The primary structure comprises 274 residues: F-actin-capping protein subunit alpha (274 aa).

Belongs to the F-actin-capping protein alpha subunit family. As to quaternary structure, heterodimer of an alpha and a beta subunit.

The protein resides in the cytoplasm. Functionally, F-actin-capping proteins bind in a Ca(2+)-independent manner to the fast growing ends of actin filaments (barbed end) thereby blocking the exchange of subunits at these ends. Unlike other capping proteins (such as gelsolin and severin), these proteins do not sever actin filaments. This chain is F-actin-capping protein subunit alpha, found in Chaetomium thermophilum (strain DSM 1495 / CBS 144.50 / IMI 039719) (Thermochaetoides thermophila).